Consider the following 791-residue polypeptide: Disintegrin and metalloproteinase domain-containing protein 1a (791 aa).

The signal sequence occupies residues 1–65; the sequence is MSVAAAGRGF…LLIFLPSTFC (65 aa). The N-linked (GlcNAc...) asparagine glycan is linked to N72. The interval 201-220 is disordered; it reads CSVTPKDSPGDTSHPPRSRK. Residues 235 to 429 form the Peptidase M12B domain; the sequence is KYVEMFVVVN…HRGACLLDEP (195 aa). N256 is a glycosylation site (N-linked (GlcNAc...) asparagine). 3 cysteine pairs are disulfide-bonded: C345-C424, C385-C408, and C387-C393. Residue H370 coordinates Zn(2+). E371 is a catalytic residue. The Zn(2+) site is built by H374 and H380. Residues N407 and N484 are each glycosylated (N-linked (GlcNAc...) asparagine). The 85-residue stretch at 438–522 folds into the Disintegrin domain; sequence AANCGNGVVE…ECPANSYMQD (85 aa). C494 and C514 form a disulfide bridge. N-linked (GlcNAc...) asparagine glycosylation occurs at N630. Residues 663–697 enclose the EGF-like domain; it reads LQYNCEPQEMCHGNGVCNNFKHCHCDAGFAPPDCS. Intrachain disulfides connect C667-C679, C673-C685, and C687-C696. The helical transmembrane segment at 741–761 threads the bilayer; the sequence is VMVLVVPIFLVVLLCCLMLIA. Residues 762–791 lie on the Cytoplasmic side of the membrane; sequence YLWSEVQEVVSPPSSSESSSSSSWSDSDSQ. Residues 772 to 791 form a disordered region; sequence SPPSSSESSSSSSWSDSDSQ.

In terms of assembly, heterodimer with ADAM2/fertilin subunit beta. In terms of tissue distribution, testis.

Its subcellular location is the membrane. May be involved in sperm-egg fusion. The chain is Disintegrin and metalloproteinase domain-containing protein 1a (Adam1a) from Mus musculus (Mouse).